A 185-amino-acid chain; its full sequence is Elongation factor P (185 aa).

The protein belongs to the elongation factor P family.

Its subcellular location is the cytoplasm. Its pathway is protein biosynthesis; polypeptide chain elongation. Involved in peptide bond synthesis. Stimulates efficient translation and peptide-bond synthesis on native or reconstituted 70S ribosomes in vitro. Probably functions indirectly by altering the affinity of the ribosome for aminoacyl-tRNA, thus increasing their reactivity as acceptors for peptidyl transferase. This Lachnoclostridium phytofermentans (strain ATCC 700394 / DSM 18823 / ISDg) (Clostridium phytofermentans) protein is Elongation factor P.